The primary structure comprises 439 residues: tRNA-2-methylthio-N(6)-dimethylallyladenosine synthase (439 aa).

The region spanning 2 to 116 (LKVYIETMGC…ISQVIHKEKA (115 aa)) is the MTTase N-terminal domain. [4Fe-4S] cluster contacts are provided by Cys-11, Cys-47, Cys-79, Cys-149, Cys-153, and Cys-156. The Radical SAM core domain maps to 135–368 (KKAEVRSLLN…QNRHKEILEE (234 aa)). Residues 371 to 437 (RLEVGKTHVV…KGRLMATTKN (67 aa)) form the TRAM domain.

The protein belongs to the methylthiotransferase family. MiaB subfamily. Monomer. Requires [4Fe-4S] cluster as cofactor.

Its subcellular location is the cytoplasm. The enzyme catalyses N(6)-dimethylallyladenosine(37) in tRNA + (sulfur carrier)-SH + AH2 + 2 S-adenosyl-L-methionine = 2-methylsulfanyl-N(6)-dimethylallyladenosine(37) in tRNA + (sulfur carrier)-H + 5'-deoxyadenosine + L-methionine + A + S-adenosyl-L-homocysteine + 2 H(+). Its function is as follows. Catalyzes the methylthiolation of N6-(dimethylallyl)adenosine (i(6)A), leading to the formation of 2-methylthio-N6-(dimethylallyl)adenosine (ms(2)i(6)A) at position 37 in tRNAs that read codons beginning with uridine. This is tRNA-2-methylthio-N(6)-dimethylallyladenosine synthase from Helicobacter acinonychis (strain Sheeba).